Reading from the N-terminus, the 133-residue chain is Ribonuclease VapC29 (133 aa).

The PINc domain maps to 3 to 122 (VLLDANVLIA…TLDSGLAHLH (120 aa)). Residues D6 and D97 each contribute to the Mg(2+) site.

It belongs to the PINc/VapC protein family. Mg(2+) serves as cofactor.

Functionally, toxic component of a type II toxin-antitoxin (TA) system. Its cognate antitoxin is VapB29. Has ribonuclease activity. This is Ribonuclease VapC29 from Mycobacterium tuberculosis (strain CDC 1551 / Oshkosh).